The chain runs to 430 residues: uncharacterized protein (430 aa).

This is an uncharacterized protein from Escherichia coli (strain K12).